A 142-amino-acid chain; its full sequence is Hemoglobin subunit alpha (142 aa).

The 141-residue stretch at 2–142 (VLSPADKTNV…VSTVLTSKYR (141 aa)) folds into the Globin domain. A Phosphoserine modification is found at Ser-4. N6-succinyllysine is present on Lys-8. Phosphothreonine is present on Thr-9. Lys-12 is modified (N6-succinyllysine). The residue at position 17 (Lys-17) is an N6-acetyllysine; alternate. Residue Lys-17 is modified to N6-succinyllysine; alternate. Position 25 is a phosphotyrosine (Tyr-25). Ser-36 carries the phosphoserine modification. The residue at position 41 (Lys-41) is an N6-succinyllysine. Ser-50 is subject to Phosphoserine. His-59 is a binding site for O2. Residue His-88 coordinates heme b. Ser-103 is modified (phosphoserine). At Thr-109 the chain carries Phosphothreonine. A phosphoserine mark is found at Ser-125 and Ser-132. A phosphothreonine mark is found at Thr-135 and Thr-138. Ser-139 carries the post-translational modification Phosphoserine.

Belongs to the globin family. Heterotetramer of two alpha chains and two beta chains. Red blood cells.

Functionally, involved in oxygen transport from the lung to the various peripheral tissues. Its function is as follows. Hemopressin acts as an antagonist peptide of the cannabinoid receptor CNR1. Hemopressin-binding efficiently blocks cannabinoid receptor CNR1 and subsequent signaling. The chain is Hemoglobin subunit alpha (HBA) from Sapajus apella (Brown-capped capuchin).